The sequence spans 29 residues: Cyclotide psyleio A (29 aa).

A cross-link (cyclopeptide (Gly-Asp)) is located at residues Gly1 to Asp29. 3 cysteine pairs are disulfide-bonded: Cys5–Cys19, Cys9–Cys21, and Cys14–Cys26.

In terms of processing, this is a cyclic peptide.

In terms of biological role, probably participates in a plant defense mechanism. The protein is Cyclotide psyleio A of Psychotria brachyceras.